The following is a 361-amino-acid chain: Chorismate synthase (361 aa).

R48 and R54 together coordinate NADP(+). FMN-binding positions include 125–127 (RSS), 238–239 (NA), G278, 293–297 (KPTSS), and R319.

The protein belongs to the chorismate synthase family. Homotetramer. FMNH2 serves as cofactor.

The catalysed reaction is 5-O-(1-carboxyvinyl)-3-phosphoshikimate = chorismate + phosphate. It functions in the pathway metabolic intermediate biosynthesis; chorismate biosynthesis; chorismate from D-erythrose 4-phosphate and phosphoenolpyruvate: step 7/7. Catalyzes the anti-1,4-elimination of the C-3 phosphate and the C-6 proR hydrogen from 5-enolpyruvylshikimate-3-phosphate (EPSP) to yield chorismate, which is the branch point compound that serves as the starting substrate for the three terminal pathways of aromatic amino acid biosynthesis. This reaction introduces a second double bond into the aromatic ring system. This chain is Chorismate synthase, found in Klebsiella pneumoniae (strain 342).